A 596-amino-acid polypeptide reads, in one-letter code: Elongation factor 4 (596 aa).

Positions 2–184 (KHIRNFSIIA…TIVAQIPPPE (183 aa)) constitute a tr-type G domain. GTP contacts are provided by residues 14-19 (DHGKST) and 131-134 (NKID).

Belongs to the TRAFAC class translation factor GTPase superfamily. Classic translation factor GTPase family. LepA subfamily.

It localises to the cell inner membrane. It carries out the reaction GTP + H2O = GDP + phosphate + H(+). Its function is as follows. Required for accurate and efficient protein synthesis under certain stress conditions. May act as a fidelity factor of the translation reaction, by catalyzing a one-codon backward translocation of tRNAs on improperly translocated ribosomes. Back-translocation proceeds from a post-translocation (POST) complex to a pre-translocation (PRE) complex, thus giving elongation factor G a second chance to translocate the tRNAs correctly. Binds to ribosomes in a GTP-dependent manner. This is Elongation factor 4 from Shewanella loihica (strain ATCC BAA-1088 / PV-4).